The sequence spans 392 residues: Carbamoyl phosphate synthase small chain (392 aa).

The tract at residues methionine 1–aspartate 174 is CPSase. L-glutamine contacts are provided by serine 47, glycine 224, and glycine 226. Residues serine 176–arginine 392 form the Glutamine amidotransferase type-1 domain. The Nucleophile role is filled by cysteine 252. Positions 253, 256, 294, 296, and 297 each coordinate L-glutamine. Catalysis depends on residues histidine 367 and glutamate 369.

It belongs to the CarA family. In terms of assembly, composed of two chains; the small (or glutamine) chain promotes the hydrolysis of glutamine to ammonia, which is used by the large (or ammonia) chain to synthesize carbamoyl phosphate. Tetramer of heterodimers (alpha,beta)4.

The catalysed reaction is hydrogencarbonate + L-glutamine + 2 ATP + H2O = carbamoyl phosphate + L-glutamate + 2 ADP + phosphate + 2 H(+). It catalyses the reaction L-glutamine + H2O = L-glutamate + NH4(+). Its pathway is amino-acid biosynthesis; L-arginine biosynthesis; carbamoyl phosphate from bicarbonate: step 1/1. The protein operates within pyrimidine metabolism; UMP biosynthesis via de novo pathway; (S)-dihydroorotate from bicarbonate: step 1/3. Small subunit of the glutamine-dependent carbamoyl phosphate synthetase (CPSase). CPSase catalyzes the formation of carbamoyl phosphate from the ammonia moiety of glutamine, carbonate, and phosphate donated by ATP, constituting the first step of 2 biosynthetic pathways, one leading to arginine and/or urea and the other to pyrimidine nucleotides. The small subunit (glutamine amidotransferase) binds and cleaves glutamine to supply the large subunit with the substrate ammonia. The sequence is that of Carbamoyl phosphate synthase small chain from Thermotoga maritima (strain ATCC 43589 / DSM 3109 / JCM 10099 / NBRC 100826 / MSB8).